We begin with the raw amino-acid sequence, 334 residues long: ATP-dependent kinase YFH7 (334 aa).

An ATP-binding site is contributed by 30–38 (GHPGSGKST).

It belongs to the YFH7 family.

Functionally, ATP-dependent kinase that could be involved in endoplasmic reticulum membrane assembly. This chain is ATP-dependent kinase YFH7 (YFH7), found in Eremothecium gossypii (strain ATCC 10895 / CBS 109.51 / FGSC 9923 / NRRL Y-1056) (Yeast).